The chain runs to 186 residues: TATA-box-binding protein F (186 aa).

Repeat copies occupy residues 10 to 86 (IENV…FDDL) and 101 to 179 (VQNI…NDRL).

Belongs to the TBP family.

In terms of biological role, general factor that plays a role in the activation of archaeal genes transcribed by RNA polymerase. Binds specifically to the TATA box promoter element which lies close to the position of transcription initiation. This is TATA-box-binding protein F (tbpF) from Halobacterium salinarum (strain ATCC 700922 / JCM 11081 / NRC-1) (Halobacterium halobium).